Here is a 503-residue protein sequence, read N- to C-terminus: E3 ubiquitin-protein ligase ariadne-1 (503 aa).

The segment covering 1–11 (MDSDNDNDFCD) has biased composition (acidic residues). The interval 1–40 (MDSDNDNDFCDNVDSGNVSSGDDGDDDFGMEVDLPSSADR) is disordered. Low complexity predominate over residues 12–21 (NVDSGNVSSG). The TRIAD supradomain stretch occupies residues 129-340 (QCEECEICFS…SSWYNCNRYD (212 aa)). Residues cysteine 133, cysteine 136, cysteine 150, histidine 152, cysteine 155, cysteine 158, cysteine 178, cysteine 183, cysteine 223, cysteine 228, cysteine 244, cysteine 246, cysteine 251, cysteine 254, histidine 259, cysteine 264, cysteine 291, and cysteine 294 each coordinate Zn(2+). The segment at 133–183 (CEICFSQLPPDSMAGLECGHRFCMPCWHEYLSTKIVAEGLGQTISCAAHGC) adopts an RING-type 1 zinc-finger fold. The segment at 133-201 (CEICFSQLPP…VANLVTDARV (69 aa)) is important for interaction with Ubc10. The IBR-type zinc-finger motif lies at 203 to 264 (VKYQQLITNS…GENWHDPVKC (62 aa)). The RING-type 2; atypical zinc finger occupies 291 to 322 (CPRCSVTIEKDGGCNHMVCKNQNCKNEFCWVC). Cysteine 304 is an active-site residue. 6 residues coordinate Zn(2+): cysteine 309, cysteine 314, cysteine 319, cysteine 322, histidine 329, and cysteine 336. Positions 341 to 361 (EDEAKTARDAQEKLRSSLARY) form a coiled coil.

This sequence belongs to the RBR family. Ariadne subfamily. Can form homodimers. Interacts (via RING-type 1 zinc finger) with Ubc10. Interacts with the LINC complex member koi. Interacts with park. Interacts with ari-2. Specifically interacts with isoform ECR-A of EcR. In terms of processing, autophosphorylated. As to expression, widely expressed, with prominent levels in the nervous system and female gonads.

The protein localises to the cytoplasm. It localises to the nucleus. The catalysed reaction is [E2 ubiquitin-conjugating enzyme]-S-ubiquitinyl-L-cysteine + [acceptor protein]-L-lysine = [E2 ubiquitin-conjugating enzyme]-L-cysteine + [acceptor protein]-N(6)-ubiquitinyl-L-lysine.. Functionally, atypical E3 ubiquitin-protein ligase, which catalyzes ubiquitination of target proteins together with ubiquitin-conjugating enzyme E2 Ubc10. Controls the subcellular localization and morphology of muscle nuclei (myonuclei) by regulating the protein levels and distribution of the LINC (LInker of Nucleoskeleton and Cytoskeleton) complex. Functions by mediating the monoubiquitination of the LINC complex subunit koi leading to its subsequent proteasomal degradation. Appears to function, at least partially redundantly, with the RBR E3 ligase family member park in nuclear localization and morphology. Likely to function in metamorphosis by regulating the proteins levels of EcR isoform A (ECR-A) and its heterodimeric partner usp, via the ubiquitination and subsequent degradation of ECR-A. This Drosophila melanogaster (Fruit fly) protein is E3 ubiquitin-protein ligase ariadne-1.